The following is a 495-amino-acid chain: D-hydantoinase/dihydropyrimidinase (495 aa).

Zn(2+)-binding residues include His-59, His-61, and Lys-150. Lys-150 carries the post-translational modification N6-carboxylysine. Tyr-155 serves as a coordination point for substrate. Zn(2+)-binding residues include His-183 and His-239. Substrate is bound at residue Ser-289. Position 316 (Asp-316) interacts with Zn(2+). Asn-337 is a binding site for substrate.

It belongs to the metallo-dependent hydrolases superfamily. Hydantoinase/dihydropyrimidinase family. As to quaternary structure, homotetramer. It depends on Zn(2+) as a cofactor. Post-translationally, carboxylation allows a single lysine to coordinate two zinc ions.

The enzyme catalyses 5,6-dihydrouracil + H2O = 3-(carbamoylamino)propanoate + H(+). In terms of biological role, catalyzes the hydrolysis of dihydropyrimidines and of the structurally related DL-5-mono-substituted hydantoins, to produce N-carbamoyl-D-amino acids. This is D-hydantoinase/dihydropyrimidinase from Pseudomonas putida (Arthrobacter siderocapsulatus).